An 83-amino-acid chain; its full sequence is Exodeoxyribonuclease 7 small subunit (83 aa).

It belongs to the XseB family. Heterooligomer composed of large and small subunits.

Its subcellular location is the cytoplasm. The enzyme catalyses Exonucleolytic cleavage in either 5'- to 3'- or 3'- to 5'-direction to yield nucleoside 5'-phosphates.. Bidirectionally degrades single-stranded DNA into large acid-insoluble oligonucleotides, which are then degraded further into small acid-soluble oligonucleotides. The polypeptide is Exodeoxyribonuclease 7 small subunit (Rhodopseudomonas palustris (strain ATCC BAA-98 / CGA009)).